The sequence spans 324 residues: Ferrochelatase (324 aa).

Positions 197 and 278 each coordinate Fe cation.

The protein belongs to the ferrochelatase family.

It localises to the cytoplasm. It carries out the reaction heme b + 2 H(+) = protoporphyrin IX + Fe(2+). It participates in porphyrin-containing compound metabolism; protoheme biosynthesis; protoheme from protoporphyrin-IX: step 1/1. In terms of biological role, catalyzes the ferrous insertion into protoporphyrin IX. This is Ferrochelatase from Aeromonas hydrophila subsp. hydrophila (strain ATCC 7966 / DSM 30187 / BCRC 13018 / CCUG 14551 / JCM 1027 / KCTC 2358 / NCIMB 9240 / NCTC 8049).